The sequence spans 381 residues: Diguanylate cyclase DosC (381 aa).

H98 serves as a coordination point for heme. The GGDEF domain occupies 325 to 381; that stretch reads TPLSVLIIDVDKFKEINDTWGHNTGDEILRKVSFLSQKRLVKSKILGAGSSRKLAVS. D333 provides a ligand contact to Mg(2+). Substrate contacts are provided by N341 and D350.

The cofactor is heme. Requires Mg(2+) as cofactor.

It catalyses the reaction 2 GTP = 3',3'-c-di-GMP + 2 diphosphate. The protein operates within purine metabolism; 3',5'-cyclic di-GMP biosynthesis. In terms of biological role, globin-coupled heme-based oxygen sensor protein displaying diguanylate cyclase (DGC) activity in response to oxygen availability. Thus, catalyzes the synthesis of cyclic diguanylate (c-di-GMP) via the condensation of 2 GTP molecules. Cyclic-di-GMP is a second messenger which controls cell surface-associated traits in bacteria. The protein is Diguanylate cyclase DosC (dosC) of Shigella flexneri serotype 5b (strain 8401).